The following is a 429-amino-acid chain: Enolase (429 aa).

Gln-162 contributes to the (2R)-2-phosphoglycerate binding site. The active-site Proton donor is Glu-204. Positions 241, 286, and 313 each coordinate Mg(2+). 4 residues coordinate (2R)-2-phosphoglycerate: Lys-338, Arg-367, Ser-368, and Lys-389. Lys-338 serves as the catalytic Proton acceptor.

Belongs to the enolase family. The cofactor is Mg(2+).

It localises to the cytoplasm. The protein localises to the secreted. Its subcellular location is the cell surface. The catalysed reaction is (2R)-2-phosphoglycerate = phosphoenolpyruvate + H2O. Its pathway is carbohydrate degradation; glycolysis; pyruvate from D-glyceraldehyde 3-phosphate: step 4/5. Functionally, catalyzes the reversible conversion of 2-phosphoglycerate (2-PG) into phosphoenolpyruvate (PEP). It is essential for the degradation of carbohydrates via glycolysis. In Halalkalibacterium halodurans (strain ATCC BAA-125 / DSM 18197 / FERM 7344 / JCM 9153 / C-125) (Bacillus halodurans), this protein is Enolase.